Consider the following 72-residue polypeptide: Large ribosomal subunit protein uL29 (72 aa).

Belongs to the universal ribosomal protein uL29 family.

This chain is Large ribosomal subunit protein uL29, found in Prochlorococcus marinus (strain MIT 9515).